The chain runs to 175 residues: FOXL2 neighbor protein (175 aa).

Disordered regions lie at residues 1-39 (MTRTPVGSARTRPKPRKLGPQRGKALQASSRLSESPALV) and 70-100 (AQKTGPGILQQRQKPPAPRASGGPALLGKRR).

In Homo sapiens (Human), this protein is FOXL2 neighbor protein (FOXL2NB).